The chain runs to 181 residues: uncharacterized protein (181 aa).

The N-terminal stretch at 1–23 (MKKCLLFLTTIALILSLSTNAFA) is a signal peptide.

This is an uncharacterized protein from Bacillus subtilis (strain 168).